The following is a 356-amino-acid chain: uncharacterized protein (356 aa).

Its subcellular location is the cytoplasm. The protein localises to the nucleus. This is an uncharacterized protein from Saccharomyces cerevisiae (strain ATCC 204508 / S288c) (Baker's yeast).